Consider the following 377-residue polypeptide: Chaperone protein DnaJ (377 aa).

A J domain is found at 5 to 70 (DCYEVLGISR…QKKAAYDQYG (66 aa)). The CR-type zinc finger occupies 133-211 (GISKEIQIPT…CHGHGRYERS (79 aa)). Zn(2+) contacts are provided by Cys146, Cys149, Cys163, Cys166, Cys185, Cys188, Cys199, and Cys202. 4 CXXCXGXG motif repeats span residues 146-153 (CEQCNGSG), 163-170 (CGTCYGQG), 185-192 (CPTCRGQG), and 199-206 (CHKCHGHG).

Belongs to the DnaJ family. Homodimer. It depends on Zn(2+) as a cofactor.

It is found in the cytoplasm. Functionally, participates actively in the response to hyperosmotic and heat shock by preventing the aggregation of stress-denatured proteins and by disaggregating proteins, also in an autonomous, DnaK-independent fashion. Unfolded proteins bind initially to DnaJ; upon interaction with the DnaJ-bound protein, DnaK hydrolyzes its bound ATP, resulting in the formation of a stable complex. GrpE releases ADP from DnaK; ATP binding to DnaK triggers the release of the substrate protein, thus completing the reaction cycle. Several rounds of ATP-dependent interactions between DnaJ, DnaK and GrpE are required for fully efficient folding. Also involved, together with DnaK and GrpE, in the DNA replication of plasmids through activation of initiation proteins. The protein is Chaperone protein DnaJ of Psychromonas ingrahamii (strain DSM 17664 / CCUG 51855 / 37).